Consider the following 642-residue polypeptide: Threonine--tRNA ligase (642 aa).

A TGS domain is found at 1-61 (MPVITLPDGS…ENDAQLSIIT (61 aa)). Positions 243 to 534 (DHRKIGKQLD…LTEEFAGFFP (292 aa)) are catalytic. Lys286 is modified (N6-acetyllysine). 3 residues coordinate Zn(2+): Cys334, His385, and His511.

The protein belongs to the class-II aminoacyl-tRNA synthetase family. In terms of assembly, homodimer. Requires Zn(2+) as cofactor.

It is found in the cytoplasm. The enzyme catalyses tRNA(Thr) + L-threonine + ATP = L-threonyl-tRNA(Thr) + AMP + diphosphate + H(+). Catalyzes the attachment of threonine to tRNA(Thr) in a two-step reaction: L-threonine is first activated by ATP to form Thr-AMP and then transferred to the acceptor end of tRNA(Thr). Also edits incorrectly charged L-seryl-tRNA(Thr). The polypeptide is Threonine--tRNA ligase (Escherichia coli O157:H7).